Consider the following 276-residue polypeptide: Molybdenum storage protein subunit alpha (276 aa).

As to quaternary structure, octamer consisting of 4 alpha and 4 beta chains.

It is found in the cytoplasm. Functionally, intracellular storage of molybdenum. Binds polyoxomolybdates. Can bind at least 90 molybdenum atoms per protein molecule. The sequence is that of Molybdenum storage protein subunit alpha from Azotobacter vinelandii (strain DJ / ATCC BAA-1303).